Consider the following 2594-residue polypeptide: Immunoglobulin superfamily member 10 (2594 aa).

The signal sequence occupies residues 1 to 25 (MQKRGREVSCLLISLTAICLVVTPG). An LRRNT domain is found at 29 to 56 (CPRRCACYVPTEVHCTFRYLTSIPDGIP). LRR repeat units follow at residues 58-79 (NVER…DFSG), 82-103 (RLEL…TFSG), 106-127 (SLQV…TLYG), 130-151 (SLTR…AFYG), 154-175 (LLRL…TFVS), and 186-207 (FIKY…MVSS). One can recognise an LRRCT domain in the interval 219–281 (NPWTCDCHLK…VPSGSFLCTK (63 aa)). Asn-439 carries an N-linked (GlcNAc...) asparagine glycan. Ig-like C2-type domains lie at 461-567 (PKAE…YRIT) and 571-661 (PYVE…FQVS). Cystine bridges form between Cys-497/Cys-551 and Cys-595/Cys-645. N-linked (GlcNAc...) asparagine glycosylation occurs at Asn-627. Over residues 670–685 (IEHDRDIDGSGLEEPK) the composition is skewed to basic and acidic residues. Disordered regions lie at residues 670 to 725 (IEHD…RDLT) and 963 to 1008 (VSSN…GRER). The segment covering 715-725 (IHKKNKHRDLT) has biased composition (basic residues). A compositionally biased stretch (basic and acidic residues) spans 972–984 (TTKDPGFSKRPSD). Positions 985-1003 (SHTTAPSLFQTPRNNSTGN) are enriched in polar residues. Residue Asn-1044 is glycosylated (N-linked (GlcNAc...) asparagine). Disordered stretches follow at residues 1228-1251 (TATK…PSTT), 1333-1364 (VRSK…GYST), and 1428-1457 (SQES…PSPP). Residues 1333–1342 (VRSKKAKDQT) are compositionally biased toward basic and acidic residues. Polar residues predominate over residues 1355–1364 (TPRQISGYST). Ig-like C2-type domains are found at residues 1619-1710 (PRII…VTLS), 1715-1807 (PARI…VKIQ), 1812-1901 (PPVI…RRVV), 1912-2005 (PRIE…VRLR), 2008-2106 (PAKI…VHLT), 2112-2200 (PRIR…YKLD), 2205-2302 (PPLI…LKVL), 2308-2398 (PTFR…ILLE), 2403-2493 (PVIL…VPVT), and 2499-2592 (PRII…TYIQ). 3 cysteine pairs are disulfide-bonded: Cys-1641-Cys-1694, Cys-1738-Cys-1791, and Cys-1835-Cys-1888. The LRR 11 repeat unit spans residues 1658-1681 (SGREISRGIQKTRFHVLPNGTLSI). Residues Asn-1676, Asn-1780, Asn-1870, and Asn-1933 are each glycosylated (N-linked (GlcNAc...) asparagine). Cystine bridges form between Cys-1934/Cys-1987, Cys-2031/Cys-2090, Cys-2134/Cys-2184, Cys-2232/Cys-2284, Cys-2330/Cys-2382, Cys-2425/Cys-2477, and Cys-2521/Cys-2576. Asn-2072 is a glycosylation site (N-linked (GlcNAc...) asparagine). Asn-2364 carries N-linked (GlcNAc...) asparagine glycosylation. Phosphotyrosine is present on Tyr-2574.

As to expression, in the embryo, expressed in the nasal mesenchyme.

The protein localises to the secreted. Its function is as follows. Involved in the control of early migration of neurons expressing gonadotropin-releasing hormone (GNRH neurons). May be involved in the maintenance of osteochondroprogenitor cells pool. The polypeptide is Immunoglobulin superfamily member 10 (Igsf10) (Mus musculus (Mouse)).